Here is an 81-residue protein sequence, read N- to C-terminus: ATP synthase subunit C, plastid (81 aa).

Transmembrane regions (helical) follow at residues 3–23 (PIIS…ASIG) and 57–77 (LAFM…LLFA).

The protein belongs to the ATPase C chain family. As to quaternary structure, F-type ATPases have 2 components, F(1) - the catalytic core - and F(0) - the membrane proton channel. F(1) has five subunits: alpha(3), beta(3), gamma(1), delta(1), epsilon(1). F(0) has four main subunits: a(1), b(1), b'(1) and c(10-14). The alpha and beta chains form an alternating ring which encloses part of the gamma chain. F(1) is attached to F(0) by a central stalk formed by the gamma and epsilon chains, while a peripheral stalk is formed by the delta, b and b' chains.

Its subcellular location is the plastid membrane. In terms of biological role, f(1)F(0) ATP synthase produces ATP from ADP in the presence of a proton or sodium gradient. F-type ATPases consist of two structural domains, F(1) containing the extramembraneous catalytic core and F(0) containing the membrane proton channel, linked together by a central stalk and a peripheral stalk. During catalysis, ATP synthesis in the catalytic domain of F(1) is coupled via a rotary mechanism of the central stalk subunits to proton translocation. Its function is as follows. Key component of the F(0) channel; it plays a direct role in translocation across the membrane. A homomeric c-ring of between 10-14 subunits forms the central stalk rotor element with the F(1) delta and epsilon subunits. The chain is ATP synthase subunit C, plastid from Cuscuta gronovii (Common dodder).